The following is a 155-amino-acid chain: Small ribosomal subunit protein bS6 (155 aa).

Positions 115-137 (EADAAKAEADAARVEAEAKKAET) are enriched in basic and acidic residues. The interval 115 to 155 (EADAAKAEADAARVEAEAKKAETDETDETVDAETPENEEEN) is disordered. Positions 138 to 155 (DETDETVDAETPENEEEN) are enriched in acidic residues.

This sequence belongs to the bacterial ribosomal protein bS6 family.

Binds together with bS18 to 16S ribosomal RNA. The sequence is that of Small ribosomal subunit protein bS6 from Desulforapulum autotrophicum (strain ATCC 43914 / DSM 3382 / VKM B-1955 / HRM2) (Desulfobacterium autotrophicum).